A 296-amino-acid chain; its full sequence is Polyamine aminopropyltransferase (296 aa).

The PABS domain occupies Glu5–Gln238. Gln33 serves as a coordination point for S-methyl-5'-thioadenosine. Residues His64 and Asp88 each contribute to the spermidine site. S-methyl-5'-thioadenosine is bound by residues Glu108 and Asp140–Gly141. The active-site Proton acceptor is Asp158. Asp158 to Asp161 provides a ligand contact to spermidine. Pro165 contributes to the S-methyl-5'-thioadenosine binding site.

The protein belongs to the spermidine/spermine synthase family. Homodimer or homotetramer.

The protein resides in the cytoplasm. It carries out the reaction S-adenosyl 3-(methylsulfanyl)propylamine + putrescine = S-methyl-5'-thioadenosine + spermidine + H(+). It functions in the pathway amine and polyamine biosynthesis; spermidine biosynthesis; spermidine from putrescine: step 1/1. Catalyzes the irreversible transfer of a propylamine group from the amino donor S-adenosylmethioninamine (decarboxy-AdoMet) to putrescine (1,4-diaminobutane) to yield spermidine. The chain is Polyamine aminopropyltransferase from Yersinia pestis bv. Antiqua (strain Antiqua).